Reading from the N-terminus, the 198-residue chain is HTH-type transcriptional regulator BetI (198 aa).

Residues 8 to 68 form the HTH tetR-type domain; sequence PLRRRELIDA…ATMRHLLREL (61 aa). The segment at residues 31 to 50 is a DNA-binding region (H-T-H motif); the sequence is TVAQIAHEAGVSPALAHHYF.

The protein operates within amine and polyamine biosynthesis; betaine biosynthesis via choline pathway [regulation]. Functionally, repressor involved in the biosynthesis of the osmoprotectant glycine betaine. It represses transcription of the choline transporter BetT and the genes of BetAB involved in the synthesis of glycine betaine. In Brucella suis (strain ATCC 23445 / NCTC 10510), this protein is HTH-type transcriptional regulator BetI.